We begin with the raw amino-acid sequence, 101 residues long: Small ribosomal subunit protein uS10 (101 aa).

Belongs to the universal ribosomal protein uS10 family. As to quaternary structure, part of the 30S ribosomal subunit.

Involved in the binding of tRNA to the ribosomes. The chain is Small ribosomal subunit protein uS10 from Methanocaldococcus jannaschii (strain ATCC 43067 / DSM 2661 / JAL-1 / JCM 10045 / NBRC 100440) (Methanococcus jannaschii).